Here is a 352-residue protein sequence, read N- to C-terminus: Outer membrane protein assembly factor BamC (352 aa).

Positions 1-19 are cleaved as a signal peptide; that stretch reads MQYWIPKALAVSVLVSLSG. Residue Cys-20 is the site of N-palmitoyl cysteine attachment. Cys-20 carries the S-diacylglycerol cysteine lipid modification.

Belongs to the BamC family. In terms of assembly, part of the Bam complex.

The protein resides in the cell outer membrane. Part of the outer membrane protein assembly complex, which is involved in assembly and insertion of beta-barrel proteins into the outer membrane. The sequence is that of Outer membrane protein assembly factor BamC from Pseudoalteromonas sp. (strain SM9913).